Consider the following 6995-residue polypeptide: Fibrous sheath-interacting protein 2 (6995 aa).

3 disordered regions span residues glutamate 273–glutamine 292, aspartate 308–lysine 336, and glycine 351–proline 476. Residues threonine 359–serine 396 show a composition bias toward polar residues. Over residues glutamate 397–arginine 421 the composition is skewed to basic and acidic residues. Residues isoleucine 424–leucine 442 show a composition bias toward polar residues. Serine 430 is modified (phosphoserine). A compositionally biased stretch (basic and acidic residues) spans aspartate 443–lysine 452. Over residues serine 453 to serine 463 the composition is skewed to polar residues. Positions leucine 665 to lysine 692 form a coiled coil. Disordered regions lie at residues proline 1452–threonine 1472, lysine 2554–methionine 2595, threonine 2699–valine 2731, proline 3182–threonine 3270, glycine 5489–glycine 5665, serine 5719–lysine 5740, lysine 5823–lysine 5878, lysine 5943–leucine 5996, and serine 6973–arginine 6995. A compositionally biased stretch (basic and acidic residues) spans serine 2555 to serine 2565. The span at proline 3187–valine 3204 shows a compositional bias: polar residues. Over residues serine 3220–serine 3231 the composition is skewed to low complexity. Residues cysteine 3232–alanine 3250 are compositionally biased toward polar residues. Positions serine 3255–arginine 3265 are enriched in basic residues. The segment covering aspartate 5496–threonine 5509 has biased composition (basic and acidic residues). Composition is skewed to polar residues over residues methionine 5523–threonine 5557, glutamine 5565–methionine 5625, and valine 5638–lysine 5650. 2 stretches are compositionally biased toward basic and acidic residues: residues serine 5719–threonine 5738 and glycine 5829–serine 5877. Over residues serine 5982–proline 5993 the composition is skewed to polar residues. The segment covering serine 6977–arginine 6995 has biased composition (low complexity).

As to quaternary structure, may interact with AKAP4. As to expression, predominantly expressed in testis.

Functionally, plays a role in spermatogenesis. This Mus musculus (Mouse) protein is Fibrous sheath-interacting protein 2 (Fsip2).